The sequence spans 325 residues: Anthranilate phosphoribosyltransferase (325 aa).

5-phospho-alpha-D-ribose 1-diphosphate contacts are provided by residues Gly73, 76–77 (GD), Thr81, 83–86 (NIST), 100–108 (KHGNVSITS), and Ser112. Gly73 contacts anthranilate. Residue Ser85 coordinates Mg(2+). Asn103 lines the anthranilate pocket. Arg158 lines the anthranilate pocket. The Mg(2+) site is built by Asp216 and Glu217.

It belongs to the anthranilate phosphoribosyltransferase family. As to quaternary structure, homodimer. The cofactor is Mg(2+).

The enzyme catalyses N-(5-phospho-beta-D-ribosyl)anthranilate + diphosphate = 5-phospho-alpha-D-ribose 1-diphosphate + anthranilate. The protein operates within amino-acid biosynthesis; L-tryptophan biosynthesis; L-tryptophan from chorismate: step 2/5. Functionally, catalyzes the transfer of the phosphoribosyl group of 5-phosphorylribose-1-pyrophosphate (PRPP) to anthranilate to yield N-(5'-phosphoribosyl)-anthranilate (PRA). The sequence is that of Anthranilate phosphoribosyltransferase from Methanococcus aeolicus (strain ATCC BAA-1280 / DSM 17508 / OCM 812 / Nankai-3).